A 151-amino-acid polypeptide reads, in one-letter code: Ribosome maturation factor RimP (151 aa).

It belongs to the RimP family.

It localises to the cytoplasm. In terms of biological role, required for maturation of 30S ribosomal subunits. The chain is Ribosome maturation factor RimP from Aliivibrio salmonicida (strain LFI1238) (Vibrio salmonicida (strain LFI1238)).